Consider the following 54-residue polypeptide: MARNEIRPAVKLRSTAGTGYTYITRKNRRNDPDRLILSKYDPVIRKHVPFREER.

Belongs to the bacterial ribosomal protein bL33 family.

The polypeptide is Large ribosomal subunit protein bL33A (Mycobacterium marinum (strain ATCC BAA-535 / M)).